The chain runs to 186 residues: dCTP deaminase (186 aa).

107–112 (KSTYAR) serves as a coordination point for dCTP. Residue Glu133 is the Proton donor/acceptor of the active site. Residues Gln152, Tyr166, and Gln176 each coordinate dCTP.

Belongs to the dCTP deaminase family. As to quaternary structure, homotrimer.

The catalysed reaction is dCTP + H2O + H(+) = dUTP + NH4(+). It functions in the pathway pyrimidine metabolism; dUMP biosynthesis; dUMP from dCTP (dUTP route): step 1/2. Its function is as follows. Catalyzes the deamination of dCTP to dUTP. This chain is dCTP deaminase, found in Campylobacter curvus (strain 525.92).